Consider the following 200-residue polypeptide: Large ribosomal subunit protein bL25 (200 aa).

Belongs to the bacterial ribosomal protein bL25 family. CTC subfamily. Part of the 50S ribosomal subunit; part of the 5S rRNA/L5/L18/L25 subcomplex. Contacts the 5S rRNA. Binds to the 5S rRNA independently of L5 and L18.

Its function is as follows. This is one of the proteins that binds to the 5S RNA in the ribosome where it forms part of the central protuberance. In Caldicellulosiruptor bescii (strain ATCC BAA-1888 / DSM 6725 / KCTC 15123 / Z-1320) (Anaerocellum thermophilum), this protein is Large ribosomal subunit protein bL25.